We begin with the raw amino-acid sequence, 505 residues long: Phosphoethanolamine N-methyltransferase (505 aa).

S-adenosyl-L-homocysteine contacts are provided by glycine 76, arginine 81, aspartate 97, aspartate 122, valine 123, and asparagine 141. Phosphocholine contacts are provided by serine 174, serine 179, glycine 180, arginine 184, and tyrosine 191. Residues 260–261 (QY) and tyrosine 269 each bind N-methylethanolamine phosphate. Residue tyrosine 269 coordinates phosphocholine. Residues valine 278, serine 279, glycine 305, aspartate 327, aspartate 353, cysteine 354, and arginine 370 each coordinate S-adenosyl-L-homocysteine. The phosphocholine site is built by tyrosine 401, tyrosine 415, arginine 419, tyrosine 421, and lysine 487. N-methylethanolamine phosphate is bound by residues tyrosine 401, tyrosine 415, 419-421 (RGY), and lysine 487.

This sequence belongs to the class I-like SAM-binding methyltransferase superfamily. PEAMT family.

It catalyses the reaction phosphoethanolamine + S-adenosyl-L-methionine = N-methylethanolamine phosphate + S-adenosyl-L-homocysteine + H(+). It carries out the reaction N-methylethanolamine phosphate + S-adenosyl-L-methionine = N,N-dimethylethanolamine phosphate + S-adenosyl-L-homocysteine + H(+). The catalysed reaction is N,N-dimethylethanolamine phosphate + S-adenosyl-L-methionine = phosphocholine + S-adenosyl-L-homocysteine + H(+). The protein operates within phospholipid metabolism; phosphatidylcholine biosynthesis; phosphocholine from phosphoethanolamine: step 1/1. With respect to regulation, inhibited by phosphatidic acid. Involved in phosphocholine biosynthesis. Catalyzes the N-methylation of phosphoethanolamine, phosphomonomethylethanolamine and phosphodimethylethanolamine, the three methylation steps required to convert phosphoethanolamine to phosphocholine (PC). This chain is Phosphoethanolamine N-methyltransferase, found in Triticum aestivum (Wheat).